The sequence spans 206 residues: Ribonuclease M5 (206 aa).

Residues 8-91 (NEVIVVEGRD…AFLNRDEARP (84 aa)) form the Toprim domain. Mg(2+) is bound by residues Glu14, Asp60, and Asp62.

Belongs to the ribonuclease M5 family. Mg(2+) is required as a cofactor.

The protein localises to the cytoplasm. It carries out the reaction Endonucleolytic cleavage of RNA, removing 21 and 42 nucleotides, respectively, from the 5'- and 3'-termini of a 5S-rRNA precursor.. Functionally, required for correct processing of both the 5' and 3' ends of 5S rRNA precursor. Cleaves both sides of a double-stranded region yielding mature 5S rRNA in one step. This chain is Ribonuclease M5, found in Lactococcus lactis subsp. lactis (strain IL1403) (Streptococcus lactis).